The chain runs to 184 residues: Large ribosomal subunit protein uL6 (184 aa).

The protein belongs to the universal ribosomal protein uL6 family. As to quaternary structure, part of the 50S ribosomal subunit.

In terms of biological role, this protein binds to the 23S rRNA, and is important in its secondary structure. It is located near the subunit interface in the base of the L7/L12 stalk, and near the tRNA binding site of the peptidyltransferase center. This Thermococcus gammatolerans (strain DSM 15229 / JCM 11827 / EJ3) protein is Large ribosomal subunit protein uL6.